Reading from the N-terminus, the 182-residue chain is MPLDVALKKKYYDEVRPELIRRFGYQNIWEVPRLEKVVINQGLGEAKEDARILEKASKELALIAGQKPAITRAKKSISNFKLRKGMPIGLRVTLRGDRMWIFLEKLLSVALPRIRDFRGLNPNSFDGRGNYNLGLKEQLIFPEITYDMVDVPRGMDIAVVTTAKTDEEAKALLELLGFPFRK.

Belongs to the universal ribosomal protein uL5 family. Part of the 50S ribosomal subunit; part of the 5S rRNA/L5/L18/L25 subcomplex. Contacts the 5S rRNA and the P site tRNA. Forms a bridge to the 30S subunit in the 70S ribosome.

Functionally, this is one of the proteins that bind and probably mediate the attachment of the 5S RNA into the large ribosomal subunit, where it forms part of the central protuberance. In the 70S ribosome it contacts protein S13 of the 30S subunit (bridge B1b), connecting the 2 subunits; this bridge is implicated in subunit movement. Contacts the P site tRNA; the 5S rRNA and some of its associated proteins might help stabilize positioning of ribosome-bound tRNAs. The sequence is that of Large ribosomal subunit protein uL5 from Thermus aquaticus.